Here is a 529-residue protein sequence, read N- to C-terminus: ATP synthase F(1) complex subunit beta, mitochondrial (529 aa).

The transit peptide at 1 to 47 (MLGFVGRVAAAPASGALRRLTPSASLPPAQLLLRAAPTAVHPVRDYA) directs the protein to the mitochondrion. S106 is a glycosylation site (O-linked (GlcNAc) serine). N6-acetyllysine; alternate is present on residues K124, K133, and K161. N6-succinyllysine; alternate occurs at positions 124, 133, and 161. K198 is subject to N6-acetyllysine. ADP contacts are provided by G209, V210, G211, K212, T213, and V214. G209 provides a ligand contact to ATP. 5 residues coordinate phosphate: G209, V210, G211, K212, and T213. Residues G211, K212, T213, and V214 each contribute to the ATP site. T213 is a Mg(2+) binding site. E238 serves as a coordination point for Mg(2+). An ATP-binding site is contributed by R239. An N6-acetyllysine; alternate mark is found at K259 and K264. K259 and K264 each carry N6-succinyllysine; alternate. The residue at position 312 (T312) is a Phosphothreonine. S415 carries the phosphoserine modification. K426 is subject to N6-acetyllysine. S433 bears the Phosphoserine mark. Residues K480 and K485 each carry the N6-acetyllysine modification. K522 carries the N6-acetyllysine; alternate modification. N6-succinyllysine; alternate is present on K522. The residue at position 529 (S529) is a Phosphoserine.

It belongs to the ATPase alpha/beta chains family. Homotrimer. Component of the ATP synthase complex composed at least of ATP5F1A/subunit alpha, ATP5F1B/subunit beta, ATP5MC1/subunit c (homooctomer), MT-ATP6/subunit a, MT-ATP8/subunit 8, ATP5ME/subunit e, ATP5MF/subunit f, ATP5MG/subunit g, ATP5MK/subunit k, ATP5MJ/subunit j, ATP5F1C/subunit gamma, ATP5F1D/subunit delta, ATP5F1E/subunit epsilon, ATP5PF/subunit F6, ATP5PB/subunit b, ATP5PD/subunit d, ATP5PO/subunit OSCP. ATP synthase complex consists of a soluble F(1) head domain (subunits alpha(3) and beta(3)) - the catalytic core - and a membrane F(0) domain - the membrane proton channel (subunits c, a, 8, e, f, g, k and j). These two domains are linked by a central stalk (subunits gamma, delta, and epsilon) rotating inside the F1 region and a stationary peripheral stalk (subunits F6, b, d, and OSCP). Interacts with PPIF. Interacts with BCL2L1 isoform BCL-X(L); the interaction mediates the association of BCL2L1 isoform BCL-X(L) with the mitochondrial membrane F(1)F(0) ATP synthase and enhances neurons metabolic efficiency. Interacts with CLN5 and PPT1. Interacts with S100A1; this interaction increases F1-ATPase activity. Interacts with MTLN. Interacts with TTC5/STRAP; the interaction results in decreased mitochondrial ATP production. It depends on Mg(2+) as a cofactor.

It localises to the mitochondrion inner membrane. It carries out the reaction ATP + H2O + 4 H(+)(in) = ADP + phosphate + 5 H(+)(out). In terms of biological role, catalytic subunit beta, of the mitochondrial membrane ATP synthase complex (F(1)F(0) ATP synthase or Complex V) that produces ATP from ADP in the presence of a proton gradient across the membrane which is generated by electron transport complexes of the respiratory chain. ATP synthase complex consist of a soluble F(1) head domain - the catalytic core - and a membrane F(1) domain - the membrane proton channel. These two domains are linked by a central stalk rotating inside the F(1) region and a stationary peripheral stalk. During catalysis, ATP synthesis in the catalytic domain of F(1) is coupled via a rotary mechanism of the central stalk subunits to proton translocation. In vivo, can only synthesize ATP although its ATP hydrolase activity can be activated artificially in vitro. With the subunit alpha (ATP5F1A), forms the catalytic core in the F(1) domain. The polypeptide is ATP synthase F(1) complex subunit beta, mitochondrial (Homo sapiens (Human)).